A 793-amino-acid polypeptide reads, in one-letter code: Probable alpha-fucosidase A (793 aa).

The first 20 residues, 1-20 (MLISGSSAALCALALPFAAA), serve as a signal peptide directing secretion. N30, N83, N100, N104, N123, N179, N199, N234, N323, N597, N622, N660, and N757 each carry an N-linked (GlcNAc...) asparagine glycan.

Belongs to the glycosyl hydrolase 95 family.

It is found in the secreted. It carries out the reaction an alpha-L-fucoside + H2O = L-fucose + an alcohol. Its function is as follows. Alpha-fucosidase involved in degradation of fucosylated xyloglucans. Hydrolyzes alpha-1,2-linked fucose. In Aspergillus niger (strain ATCC MYA-4892 / CBS 513.88 / FGSC A1513), this protein is Probable alpha-fucosidase A (afcA).